We begin with the raw amino-acid sequence, 390 residues long: S-adenosylmethionine synthase 2 (390 aa).

Glutamate 9 is a Mg(2+) binding site. Histidine 15 is an ATP binding site. Glutamate 43 serves as a coordination point for K(+). L-methionine is bound by residues glutamate 56 and glutamine 99. ATP contacts are provided by residues 167–169 (DGK), 235–238 (SGRF), aspartate 246, 252–253 (RK), alanine 269, lysine 273, and lysine 277. Aspartate 246 is a binding site for L-methionine. Residue lysine 277 participates in L-methionine binding.

The protein belongs to the AdoMet synthase family. As to quaternary structure, homotetramer. It depends on Mn(2+) as a cofactor. Mg(2+) is required as a cofactor. Requires Co(2+) as cofactor. The cofactor is K(+).

It is found in the cytoplasm. The catalysed reaction is L-methionine + ATP + H2O = S-adenosyl-L-methionine + phosphate + diphosphate. It functions in the pathway amino-acid biosynthesis; S-adenosyl-L-methionine biosynthesis; S-adenosyl-L-methionine from L-methionine: step 1/1. In terms of biological role, catalyzes the formation of S-adenosylmethionine from methionine and ATP. The reaction comprises two steps that are both catalyzed by the same enzyme: formation of S-adenosylmethionine (AdoMet) and triphosphate, and subsequent hydrolysis of the triphosphate. The protein is S-adenosylmethionine synthase 2 (SAMS2) of Nicotiana tabacum (Common tobacco).